The following is a 405-amino-acid chain: Acetylornithine/succinyldiaminopimelate aminotransferase (405 aa).

Residues 108–109 (GT) and Phe-141 contribute to the pyridoxal 5'-phosphate site. Residue Arg-144 participates in N(2)-acetyl-L-ornithine binding. Pyridoxal 5'-phosphate is bound at residue 226–229 (DEVQ). Lys-255 is subject to N6-(pyridoxal phosphate)lysine. Ser-283 provides a ligand contact to N(2)-acetyl-L-ornithine. Residue Thr-284 participates in pyridoxal 5'-phosphate binding.

Belongs to the class-III pyridoxal-phosphate-dependent aminotransferase family. ArgD subfamily. As to quaternary structure, homodimer. Requires pyridoxal 5'-phosphate as cofactor.

The protein resides in the cytoplasm. It carries out the reaction N(2)-acetyl-L-ornithine + 2-oxoglutarate = N-acetyl-L-glutamate 5-semialdehyde + L-glutamate. The enzyme catalyses N-succinyl-(2S,6S)-2,6-diaminopimelate + 2-oxoglutarate = (S)-2-succinylamino-6-oxoheptanedioate + L-glutamate. It functions in the pathway amino-acid biosynthesis; L-arginine biosynthesis; N(2)-acetyl-L-ornithine from L-glutamate: step 4/4. The protein operates within amino-acid biosynthesis; L-lysine biosynthesis via DAP pathway; LL-2,6-diaminopimelate from (S)-tetrahydrodipicolinate (succinylase route): step 2/3. In terms of biological role, involved in both the arginine and lysine biosynthetic pathways. In Salmonella typhi, this protein is Acetylornithine/succinyldiaminopimelate aminotransferase.